A 317-amino-acid chain; its full sequence is Transaldolase (317 aa).

The active-site Schiff-base intermediate with substrate is Lys132.

It belongs to the transaldolase family. Type 1 subfamily. As to quaternary structure, homodimer.

The protein resides in the cytoplasm. It carries out the reaction D-sedoheptulose 7-phosphate + D-glyceraldehyde 3-phosphate = D-erythrose 4-phosphate + beta-D-fructose 6-phosphate. Its pathway is carbohydrate degradation; pentose phosphate pathway; D-glyceraldehyde 3-phosphate and beta-D-fructose 6-phosphate from D-ribose 5-phosphate and D-xylulose 5-phosphate (non-oxidative stage): step 2/3. Transaldolase is important for the balance of metabolites in the pentose-phosphate pathway. The protein is Transaldolase of Shewanella frigidimarina (strain NCIMB 400).